The chain runs to 159 residues: Transcriptional repressor NrdR (159 aa).

The segment at 3–34 is a zinc-finger region; it reads CPFCRHDDTQVVDSRVSEDGAAIRRRRRCSAC. Residues 49–139 form the ATP-cone domain; that stretch reads PAVVKKDGSR…VYRRFEDVSE (91 aa).

The protein belongs to the NrdR family. Requires Zn(2+) as cofactor.

In terms of biological role, negatively regulates transcription of bacterial ribonucleotide reductase nrd genes and operons by binding to NrdR-boxes. The sequence is that of Transcriptional repressor NrdR from Burkholderia thailandensis (strain ATCC 700388 / DSM 13276 / CCUG 48851 / CIP 106301 / E264).